The sequence spans 208 residues: Protein-L-isoaspartate O-methyltransferase (208 aa).

Ser-59 is an active-site residue.

This sequence belongs to the methyltransferase superfamily. L-isoaspartyl/D-aspartyl protein methyltransferase family.

The protein localises to the cytoplasm. It catalyses the reaction [protein]-L-isoaspartate + S-adenosyl-L-methionine = [protein]-L-isoaspartate alpha-methyl ester + S-adenosyl-L-homocysteine. Functionally, catalyzes the methyl esterification of L-isoaspartyl residues in peptides and proteins that result from spontaneous decomposition of normal L-aspartyl and L-asparaginyl residues. It plays a role in the repair and/or degradation of damaged proteins. The chain is Protein-L-isoaspartate O-methyltransferase from Yersinia enterocolitica serotype O:8 / biotype 1B (strain NCTC 13174 / 8081).